The following is a 341-amino-acid chain: Abnormal cell lineage protein 44 (341 aa).

The first 21 residues, 1 to 21 (MRALYFRTTTLSTFFILCSLA), serve as a signal peptide directing secretion. 11 disulfide bridges follow: Cys-84–Cys-95, Cys-134–Cys-142, Cys-144–Cys-158, Cys-206–Cys-220, Cys-208–Cys-215, Cys-265–Cys-292, Cys-275–Cys-287, Cys-291–Cys-331, Cys-307–Cys-322, Cys-309–Cys-319, and Cys-314–Cys-315. Ser-212 is lipidated: O-palmitoleoyl serine; by mom-1. A glycan (N-linked (GlcNAc...) asparagine) is linked at Asn-279.

Belongs to the Wnt family. Post-translationally, palmitoleoylation is required for efficient binding to frizzled receptors. Depalmitoleoylation leads to Wnt signaling pathway inhibition.

It localises to the secreted. The protein resides in the extracellular space. The protein localises to the extracellular matrix. Its function is as follows. Ligand for members of the frizzled family of seven transmembrane receptors. Affects male tail development, vulval precursor cell specification and egg laying. Involved in morphogenesis by influencing polarity of asymmetric cell divisions of the B, U, and F cells in the male, and the T cell in males and hermaphrodites. Controls spindle orientation in B-gamma cell division during male copulatory spicule development. Involved in specification of the P7.p lineage during vulval development. Has a role in providing polarity and default lin-17 localization in axon development and positioning of neuromuscular synapses in DA9 regions by negatively regulating synaptogenesis. The chain is Abnormal cell lineage protein 44 from Caenorhabditis briggsae.